The following is a 359-amino-acid chain: Innexin inx2 (359 aa).

Topologically, residues 1–22 (MFDVFGSVKGLLKLDSVCIDNN) are cytoplasmic. A helical transmembrane segment spans residues 23–43 (LFRLHYKATVIILIAFSLLVT). At 44–109 (SRQYIGDPID…KDEVKYHKYY (66 aa)) the chain is on the extracellular side. A helical membrane pass occupies residues 110–130 (QWVCFVLFFQAILFYIPRYLW). Residues 131 to 180 (KTWEGGRIKMLVLDLNSPVVNEQSKADRKKLLVDYFATNLHTQNFYAYRF) are Cytoplasmic-facing. A helical transmembrane segment spans residues 181–201 (FICEALNFVNVVGQIYFMDLF). Topologically, residues 202 to 266 (LDGEFTTYGS…VLPLNIVNEK (65 aa)) are extracellular. The chain crosses the membrane as a helical span at residues 267 to 287 (IYVFLWFWFVILSVLTGIGLV). Residues 288 to 359 (YRLATAMGPQ…AKKLEGKEIV (72 aa)) lie on the Cytoplasmic side of the membrane.

This sequence belongs to the pannexin family. In terms of tissue distribution, widespread expression in embryo, in anterior and posterior row of neural precursors, midline precursors and in epithelial sheet of stomodeum.

The protein localises to the cell membrane. The protein resides in the cell junction. It localises to the gap junction. Structural components of the gap junctions. The sequence is that of Innexin inx2 (inx2) from Schistocerca americana (American grasshopper).